Consider the following 131-residue polypeptide: UPF0102 protein YraN (131 aa).

Residues 1–19 are compositionally biased toward polar residues; it reads MATVPTRSGSPRQLTTKQT. Positions 1–21 are disordered; the sequence is MATVPTRSGSPRQLTTKQTGD.

It belongs to the UPF0102 family.

This Shigella flexneri serotype 5b (strain 8401) protein is UPF0102 protein YraN.